Here is a 732-residue protein sequence, read N- to C-terminus: Catalase-peroxidase (732 aa).

Residues 1–23 (MSEQSRCPVTGRTADSPATGSGL) are disordered. Positions 97–220 (WHSAGTYRTS…LAAVQMGLIY (124 aa)) form a cross-link, tryptophyl-tyrosyl-methioninium (Trp-Tyr) (with M-246). His-98 functions as the Proton acceptor in the catalytic mechanism. The tryptophyl-tyrosyl-methioninium (Tyr-Met) (with W-97) cross-link spans 220–246 (YVNPEGPDGKPDPVAAGRDIRETFARM). Residue His-261 participates in heme b binding.

It belongs to the peroxidase family. Peroxidase/catalase subfamily. In terms of assembly, homodimer or homotetramer. Requires heme b as cofactor. In terms of processing, formation of the three residue Trp-Tyr-Met cross-link is important for the catalase, but not the peroxidase activity of the enzyme.

It carries out the reaction H2O2 + AH2 = A + 2 H2O. The enzyme catalyses 2 H2O2 = O2 + 2 H2O. Functionally, bifunctional enzyme with both catalase and broad-spectrum peroxidase activity. This chain is Catalase-peroxidase, found in Prosthecochloris aestuarii (strain DSM 271 / SK 413).